Consider the following 78-residue polypeptide: Antitoxin VapB1 (78 aa).

The 42-residue stretch at 3–44 (TKVFQSGNSQAVRIPMDFRFDVDTVEIFRKENGDVVLRPVSK) folds into the SpoVT-AbrB domain.

The protein belongs to the VapB family. In terms of assembly, forms multimers, as well forming as a complex with VapC1.

Antitoxin component of a type II toxin-antitoxin (TA) system. Upon expression in E.coli neutralizes the effect of toxin VapC1. In vitro inhibits the RNase activity of VapC1. This is Antitoxin VapB1 (vapB1) from Haemophilus influenzae (strain R2866).